Consider the following 319-residue polypeptide: Ankyrin repeat domain-containing protein 1 (319 aa).

Positions 63 to 89 (EKEREAELKKKKLEQRSKLENLEDLEI) form a coiled coil. ANK repeat units follow at residues 152 to 181 (YKRT…QIEF), 185 to 214 (LEST…KISA), 218 to 247 (LLST…DLNA), 251 to 280 (EGDT…DLNV), and 284 to 315 (AGKT…KASR).

In terms of assembly, interacts with TTN/titin and YBX1. As to expression, expressed in heart. In postnatal neonatal heart, it is expressed in an asymmetrical way; left ventricle favored towards right ventricle. Whether or not this could be correlated with a hypertrophic heart is still a matter of debate. Levels increase gradually from newborn to adult.

It localises to the nucleus. Its function is as follows. May play an important role in endothelial cell activation. May act as a nuclear transcription factor that negatively regulates the expression of cardiac genes. This chain is Ankyrin repeat domain-containing protein 1 (ANKRD1), found in Sus scrofa (Pig).